Consider the following 295-residue polypeptide: F-box only protein 6 (295 aa).

Residues 1–48 form the F-box domain; it reads MVHINELPENILLELFIHIPAPQLLRNCRLVCRLWRDLIDVVSLWKRK. Residues 69 to 250 form the FBA domain; that stretch reads FYILCSLQRN…VTNSSIIISH (182 aa). Phosphoserine is present on residues Ser249 and Ser276. At Thr280 the chain carries Phosphothreonine.

Interacts with CHEK1 and CUL1. Part of a SCF (SKP1-cullin-F-box) protein ligase complex. Interacts with VCP. In terms of tissue distribution, present in liver and kidney (at protein level). Widely expressed.

The protein localises to the cytoplasm. The protein operates within protein modification; protein ubiquitination. In terms of biological role, substrate-recognition component of some SCF (SKP1-CUL1-F-box protein)-type E3 ubiquitin ligase complexes. Involved in DNA damage response by specifically recognizing activated CHEK1 (phosphorylated on 'Ser-345'), promoting its ubiquitination and degradation. Ubiquitination of CHEK1 is required to ensure that activated CHEK1 does not accumulate as cells progress through S phase, or when replication forks encounter transient impediments during normal DNA replication. Involved in endoplasmic reticulum-associated degradation pathway (ERAD) for misfolded lumenal proteins by recognizing and binding sugar chains on unfolded glycoproteins that are retrotranslocated into the cytosol and promoting their ubiquitination and subsequent degradation. Able to recognize and bind denatured glycoproteins, which are modified with not only high-mannose but also complex-type oligosaccharides. Also recognizes sulfated glycans. The protein is F-box only protein 6 (Fbxo6) of Mus musculus (Mouse).